We begin with the raw amino-acid sequence, 514 residues long: Alpha-1B adrenergic receptor (514 aa).

Topologically, residues 1–45 are extracellular; that stretch reads MNPDLDTGHNTSAPAHWGELKDANFTGPNQTSSNSTLPQLDVTRA. N-linked (GlcNAc...) asparagine glycans are attached at residues asparagine 10, asparagine 24, asparagine 29, and asparagine 34. Residues 46 to 69 traverse the membrane as a helical segment; the sequence is ISVGCLGAFILFAIVGNILVILSV. At 70-82 the chain is on the cytoplasmic side; sequence ACNRHLRTPTNYF. The helical transmembrane segment at 83–104 threads the bilayer; sequence IVNLAIADLLLSFTDLPFSATL. Residues 105–114 are Extracellular-facing; sequence EVLGYWVLGR. The chain crosses the membrane as a helical span at residues 115–140; sequence IFCDIWAAVDVLCCTASILSLCAISI. A disulfide bond links cysteine 117 and cysteine 194. At 141–160 the chain is on the cytoplasmic side; that stretch reads DRYIGVRYSLQYPTLVTRRK. The helical transmembrane segment at 161-183 threads the bilayer; sequence AILALLSVWVLSTVISIGPLLGW. Over 184–200 the chain is Extracellular; it reads KEPAPNDDKECGVTEEP. A helical transmembrane segment spans residues 201-223; sequence FYALFSSLGSFYIPLAVILVMYC. Over 224 to 294 the chain is Cytoplasmic; the sequence is RVYIVAKRTT…FSREKKAAKT (71 aa). Threonine 263 is subject to Phosphothreonine. The helical transmembrane segment at 295–318 threads the bilayer; it reads LGIVVGMFILCWLPFFIALPLGSL. Over 319-325 the chain is Extracellular; it reads FSTLKPP. The helical transmembrane segment at 326–350 threads the bilayer; it reads DAVFKVVFWLGYFNSCLNPIIYPCS. The Cytoplasmic portion of the chain corresponds to 351-514; that stretch reads SKEFKRAFMR…SNMPLAPGHF (164 aa). The S-palmitoyl cysteine moiety is linked to residue cysteine 364. Positions 367-377 match the Nuclear localization signal motif; that stretch reads RGGRRRRRRRR. Disordered stretches follow at residues 391–429 and 473–514; these read GGSLERSQSRKDSLDDSGSCMSGSQRTLPSASPSPGYLG and LGEP…PGHF. Residues 409–423 are compositionally biased toward polar residues; the sequence is SCMSGSQRTLPSASP.

The protein belongs to the G-protein coupled receptor 1 family. Adrenergic receptor subfamily. ADRA1B sub-subfamily. In terms of assembly, homo- and heterooligomer. Heterooligomerizes with ADRA1B homooligomers in cardiac myocytes. Interacts with CAVIN4.

It localises to the nucleus membrane. The protein localises to the cell membrane. The protein resides in the cytoplasm. It is found in the membrane. Its subcellular location is the caveola. This alpha-adrenergic receptor mediates its action by association with G proteins that activate a phosphatidylinositol-calcium second messenger system. Its effect is mediated by G(q) and G(11) proteins. Nuclear ADRA1A-ADRA1B heterooligomers regulate phenylephrine (PE)-stimulated ERK signaling in cardiac myocytes. This chain is Alpha-1B adrenergic receptor (Adra1b), found in Mus musculus (Mouse).